The chain runs to 270 residues: Interleukin-1 beta (270 aa).

Residues 1–118 (MARVPEPTSE…KCDDNAFVHD (118 aa)) constitute a propeptide that is removed on maturation.

The protein belongs to the IL-1 family. In terms of assembly, monomer. In its precursor form, weakly interacts with full-length MEFV; the mature cytokine does not interact at all. Interacts with integrins ITGAV:ITGBV and ITGA5:ITGB1; integrin-binding is required for IL1B signaling. Interacts with cargo receptor TMED10; the interaction is direct and is required for the secretion of IL1B mature form. Interacts with HSP90AB1; the interaction facilitates cargo translocation into the ERGIC. Interacts with HSP90B1; the interaction facilitates cargo translocation into the ERGIC.

The protein localises to the cytoplasm. Its subcellular location is the cytosol. The protein resides in the secreted. It localises to the lysosome. It is found in the extracellular exosome. Functionally, potent pro-inflammatory cytokine. Initially discovered as the major endogenous pyrogen, induces prostaglandin synthesis, neutrophil influx and activation, T-cell activation and cytokine production, B-cell activation and antibody production, and fibroblast proliferation and collagen production. Promotes Th17 differentiation of T-cells. Synergizes with IL12/interleukin-12 to induce IFNG synthesis from T-helper 1 (Th1) cells. Plays a role in angiogenesis by inducing VEGF production synergistically with TNF and IL6. Involved in transduction of inflammation downstream of pyroptosis: its mature form is specifically released in the extracellular milieu by passing through the gasdermin-D (GSDMD) pore. This chain is Interleukin-1 beta (IL1B), found in Mustela putorius furo (European domestic ferret).